Here is a 149-residue protein sequence, read N- to C-terminus: Flagellar assembly factor FliW (149 aa).

It belongs to the FliW family. As to quaternary structure, interacts with translational regulator CsrA and flagellin(s).

It localises to the cytoplasm. Acts as an anti-CsrA protein, binds CsrA and prevents it from repressing translation of its target genes, one of which is flagellin. Binds to flagellin and participates in the assembly of the flagellum. This Thermotoga sp. (strain RQ2) protein is Flagellar assembly factor FliW.